Here is a 114-residue protein sequence, read N- to C-terminus: Probable non-functional T cell receptor beta variable 5-7 (114 aa).

A signal peptide spans 1 to 21 (MGPGLLCWVLLCPLGEGPVDA). An Ig-like domain is found at 22–114 (GVTQSPTHLI…SALYLCASSL (93 aa)). Residues Cys42 and Cys110 are joined by a disulfide bond. N-linked (GlcNAc...) asparagine glycosylation is present at Asn90.

Alpha-beta TR is a heterodimer composed of an alpha and beta chain; disulfide-linked. The alpha-beta TR is associated with the transmembrane signaling CD3 coreceptor proteins to form the TR-CD3 (TcR or TCR). The assembly of alpha-beta TR heterodimers with CD3 occurs in the endoplasmic reticulum where a single alpha-beta TR heterodimer associates with one CD3D-CD3E heterodimer, one CD3G-CD3E heterodimer and one CD247 homodimer forming a stable octameric structure. CD3D-CD3E and CD3G-CD3E heterodimers preferentially associate with TR alpha and TR beta chains, respectively. The association of the CD247 homodimer is the last step of TcR assembly in the endoplasmic reticulum and is required for transport to the cell surface.

It is found in the cell membrane. Functionally, probable non-functional open reading frame (ORF) of V region of the variable domain of T cell receptor (TR) beta chain. Non-functional ORF generally cannot participate in the synthesis of a productive T cell receptor (TR) chain due to altered V-(D)-J or switch recombination and/or splicing site (at mRNA level) and/or conserved amino acid change (protein level). Alpha-beta T cell receptors are antigen specific receptors which are essential to the immune response and are present on the cell surface of T lymphocytes. Recognize peptide-major histocompatibility (MH) (pMH) complexes that are displayed by antigen presenting cells (APC), a prerequisite for efficient T cell adaptive immunity against pathogens. Binding of alpha-beta TR to pMH complex initiates TR-CD3 clustering on the cell surface and intracellular activation of LCK that phosphorylates the ITAM motifs of CD3G, CD3D, CD3E and CD247 enabling the recruitment of ZAP70. In turn ZAP70 phosphorylates LAT, which recruits numerous signaling molecules to form the LAT signalosome. The LAT signalosome propagates signal branching to three major signaling pathways, the calcium, the mitogen-activated protein kinase (MAPK) kinase and the nuclear factor NF-kappa-B (NF-kB) pathways, leading to the mobilization of transcription factors that are critical for gene expression and essential for T cell growth and differentiation. The T cell repertoire is generated in the thymus, by V-(D)-J rearrangement. This repertoire is then shaped by intrathymic selection events to generate a peripheral T cell pool of self-MH restricted, non-autoaggressive T cells. Post-thymic interaction of alpha-beta TR with the pMH complexes shapes TR structural and functional avidity. This is Probable non-functional T cell receptor beta variable 5-7 from Homo sapiens (Human).